The chain runs to 65 residues: Large ribosomal subunit protein bL35 (65 aa).

The protein belongs to the bacterial ribosomal protein bL35 family.

This is Large ribosomal subunit protein bL35 from Photorhabdus laumondii subsp. laumondii (strain DSM 15139 / CIP 105565 / TT01) (Photorhabdus luminescens subsp. laumondii).